The chain runs to 71 residues: Pro-MCH (71 aa).

The first 20 residues, 1–20, serve as a signal peptide directing secretion; that stretch reads AKMNLSSYILILTFSLFSQG.

Belongs to the melanin-concentrating hormone family.

Its subcellular location is the secreted. The chain is Pro-MCH (PMCH) from Pan paniscus (Pygmy chimpanzee).